A 305-amino-acid chain; its full sequence is D-alanine--D-alanine ligase (305 aa).

The 196-residue stretch at 105-300 folds into the ATP-grasp domain; sequence KMIWQAAGIN…FDELVVQILE (196 aa). 131–186 provides a ligand contact to ATP; it reads ADRLGLPLIIKPAREGSTLGLNKVDNEQDFRSAYQAAAEYDSLVLAEQFIQGIELT. Residues aspartate 254, glutamate 267, and asparagine 269 each contribute to the Mg(2+) site.

The protein belongs to the D-alanine--D-alanine ligase family. Mg(2+) is required as a cofactor. The cofactor is Mn(2+).

It localises to the cytoplasm. The catalysed reaction is 2 D-alanine + ATP = D-alanyl-D-alanine + ADP + phosphate + H(+). Its pathway is cell wall biogenesis; peptidoglycan biosynthesis. Functionally, cell wall formation. This chain is D-alanine--D-alanine ligase, found in Nitrosomonas europaea (strain ATCC 19718 / CIP 103999 / KCTC 2705 / NBRC 14298).